Reading from the N-terminus, the 177-residue chain is Ribosome maturation factor RimP (177 aa).

It belongs to the RimP family.

It is found in the cytoplasm. Functionally, required for maturation of 30S ribosomal subunits. The sequence is that of Ribosome maturation factor RimP from Streptococcus sanguinis (strain SK36).